The chain runs to 926 residues: Protein transport protein SEC24-2 (926 aa).

The tract at residues Met-1–Ala-54 is disordered. Low complexity predominate over residues Ala-20 to Ala-54. 4 residues coordinate Zn(2+): Cys-231, Cys-234, Cys-253, and Cys-256. Positions Cys-231–Cys-256 are zinc finger-like.

Belongs to the SEC23/SEC24 family. SEC24 subfamily. As to quaternary structure, the COPII coat is composed of at least 5 proteins: the SEC23/24 complex, the SEC13/31 complex, and the protein SAR1. Golgi apparatus membrane; Peripheral membrane protein; Cytoplasmic side.

The protein localises to the cytoplasm. It is found in the cytoplasmic vesicle. Its subcellular location is the COPII-coated vesicle membrane. It localises to the endoplasmic reticulum membrane. The protein resides in the golgi apparatus membrane. In terms of biological role, component of the coat protein complex II (COPII) which promotes the formation of transport vesicles from the endoplasmic reticulum (ER). The coat has two main functions, the physical deformation of the endoplasmic reticulum membrane into vesicles and the selection of cargo molecules. This chain is Protein transport protein SEC24-2 (SEC242), found in Saccharomyces uvarum (strain ATCC 76518 / CBS 7001 / CLIB 283 / NBRC 10550 / MCYC 623 / NCYC 2669 / NRRL Y-11845) (Yeast).